We begin with the raw amino-acid sequence, 490 residues long: GTPase Der (490 aa).

EngA-type G domains follow at residues 3–166 and 196–369; these read PVIA…PKDE and IKIA…KSAV. Residues 9 to 16, 56 to 60, 118 to 121, 202 to 209, 249 to 253, and 314 to 317 each bind GTP; these read GRPNVGKS, DTGGI, NKID, DTAGV, and NKWD. One can recognise a KH-like domain in the interval 370–454; sequence TRWPTSRLTQ…PIRIEFKGGE (85 aa). Residues 452–490 form a disordered region; it reads GGENPYEGNKNTLTDRQVNKKRRMMSHHKKADKKRRDKR. Residues 470 to 490 are compositionally biased toward basic residues; the sequence is NKKRRMMSHHKKADKKRRDKR.

It belongs to the TRAFAC class TrmE-Era-EngA-EngB-Septin-like GTPase superfamily. EngA (Der) GTPase family. Associates with the 50S ribosomal subunit.

Functionally, GTPase that plays an essential role in the late steps of ribosome biogenesis. The sequence is that of GTPase Der from Pseudomonas savastanoi pv. phaseolicola (strain 1448A / Race 6) (Pseudomonas syringae pv. phaseolicola (strain 1448A / Race 6)).